We begin with the raw amino-acid sequence, 817 residues long: ABC transporter G family member STR (817 aa).

Residues 1–30 (MARLERDGTNKSLESLMDSHKPGGTTTNLN) are disordered. Residues 1–542 (MARLERDGTN…RTVLNVIRTP (542 aa)) are Cytoplasmic-facing. In terms of domain architecture, ABC transporter spans 43–294 (LEFTNLSYSI…LSGFGRPVPD (252 aa)). Position 87–94 (87–94 (GPSGAGKS)) interacts with ATP. 3 disordered regions span residues 321-349 (QYQHDGHKPDPAAMTPVPKPPRTPYRRNT), 362-395 (GFTAGTPQPDSSQFGLDDDDNDDDENFDNSLERR), and 439-463 (RPPSWTPARTPGWTPGKTPLSGPRS). The segment covering 362–375 (GFTAGTPQPDSSQF) has biased composition (polar residues). The span at 377 to 388 (LDDDDNDDDENF) shows a compositional bias: acidic residues. The chain crosses the membrane as a helical span at residues 543-563 (ELFASREIVLTVMALVLSTIF). Residues 564-579 (KNLGDTTFIDINRLLN) lie on the Extracellular side of the membrane. Residues 580–600 (FYIFAVCLVFFSSNDAVPSFI) form a helical membrane-spanning segment. The Cytoplasmic segment spans residues 601-621 (MERFIFIRETSHNAYRASSYV). A helical transmembrane segment spans residues 622–642 (ISSLIVYLPFFAVQGLTFAVI). At 643-657 (TKLMLHLKSNLFNFW) the chain is on the extracellular side. Residues 658–678 (MILFASLITTNAYVMLVSALV) form a helical membrane-spanning segment. Residues 679 to 681 (PSY) are Cytoplasmic-facing. The chain crosses the membrane as a helical span at residues 682–702 (ITGYAVVIATTALFFLTCGFF). The Extracellular segment spans residues 703–787 (LKRTQIPAYW…TMDITMESLW (85 aa)). A glycan (N-linked (GlcNAc...) asparagine) is linked at Asn-762. A helical membrane pass occupies residues 788–808 (YDILILLAWGVLYRFFFYLVL). Over 809–817 (RFYSKNERK) the chain is Cytoplasmic.

The protein belongs to the ABC transporter superfamily. ABCG family. Stunted arbuscule (STR) subfamily. As to quaternary structure, heterodimerizes with STR2; the resulting transporter is located in the peri-arbuscular membrane. In terms of tissue distribution, expressed constitutively in the vascular tissue of roots.

Its subcellular location is the cell membrane. In terms of biological role, together with STR2, required for arbuscule development in arbuscular mycorrhizal (AM) symbiosis. This is ABC transporter G family member STR from Medicago truncatula (Barrel medic).